Here is a 635-residue protein sequence, read N- to C-terminus: Probable ethylene response sensor 2 (635 aa).

3 helical membrane passes run 24–44 (ISDF…IYFV), 59–79 (FGAF…TFAI), and 94–114 (ATAV…PDLL). Cu cation contacts are provided by Cys-66 and His-70. The GAF domain occupies 159 to 308 (DRHTILRTTL…VVADQVAVAL (150 aa)). Positions 351–589 (VMNHEMRTPM…MFFVKLGMPE (239 aa)) constitute a Histidine kinase domain. At His-354 the chain carries Phosphohistidine; by autocatalysis.

This sequence belongs to the ethylene receptor family. As to quaternary structure, homodimer. Cu cation is required as a cofactor.

Its subcellular location is the endoplasmic reticulum membrane. It carries out the reaction ATP + protein L-histidine = ADP + protein N-phospho-L-histidine.. Its function is as follows. Ethylene receptor related to bacterial two-component regulators. Acts as a negative regulator of ethylene signaling. May play a role in the regulation of flowering by up-regulating GI (GIGANTEA) and RCN1 and regulate starch accumulation by down-regulating the alpha-amylase AMY3D. The polypeptide is Probable ethylene response sensor 2 (ERS2) (Oryza sativa subsp. japonica (Rice)).